The following is a 284-amino-acid chain: 2-dehydro-3-deoxyphosphooctonate aldolase (284 aa).

Belongs to the KdsA family.

The protein resides in the cytoplasm. It catalyses the reaction D-arabinose 5-phosphate + phosphoenolpyruvate + H2O = 3-deoxy-alpha-D-manno-2-octulosonate-8-phosphate + phosphate. The protein operates within carbohydrate biosynthesis; 3-deoxy-D-manno-octulosonate biosynthesis; 3-deoxy-D-manno-octulosonate from D-ribulose 5-phosphate: step 2/3. It participates in bacterial outer membrane biogenesis; lipopolysaccharide biosynthesis. The protein is 2-dehydro-3-deoxyphosphooctonate aldolase of Burkholderia cenocepacia (strain ATCC BAA-245 / DSM 16553 / LMG 16656 / NCTC 13227 / J2315 / CF5610) (Burkholderia cepacia (strain J2315)).